The primary structure comprises 363 residues: GTPase Obg (363 aa).

The 159-residue stretch at 1-159 folds into the Obg domain; it reads MKFIDEAKIY…LELRLELRVL (159 aa). The OBG-type G domain occupies 160–338; it reads ADVGLLGLPN…LIYAISEALE (179 aa). GTP contacts are provided by residues 166–173, 191–195, 213–216, 284–287, and 319–321; these read GLPNAGKS, FTTLH, DVPG, NKLD, and AAI. Mg(2+) contacts are provided by Ser173 and Thr193. Positions 342-363 are disordered; the sequence is RPEIGDLDDNDEDSDEIIRDTE. Over residues 346–356 the composition is skewed to acidic residues; the sequence is GDLDDNDEDSD.

Belongs to the TRAFAC class OBG-HflX-like GTPase superfamily. OBG GTPase family. In terms of assembly, monomer. It depends on Mg(2+) as a cofactor.

The protein resides in the cytoplasm. In terms of biological role, an essential GTPase which binds GTP, GDP and possibly (p)ppGpp with moderate affinity, with high nucleotide exchange rates and a fairly low GTP hydrolysis rate. Plays a role in control of the cell cycle, stress response, ribosome biogenesis and in those bacteria that undergo differentiation, in morphogenesis control. The chain is GTPase Obg from Dechloromonas aromatica (strain RCB).